The following is a 379-amino-acid chain: DnaJ homolog subfamily B member 14 (379 aa).

The Cytoplasmic portion of the chain corresponds to 1 to 244 (MEGNRDEAEK…GHEREEERGD (244 aa)). The disordered stretch occupies residues 55-94 (STAGNSPHCRKPSGGGDQSKPNCTKDSSSGSGESGKGYTK). The J domain maps to 108–172 (NYYEVLGVTK…EKRKQYDLTG (65 aa)). Residues 221–241 (GRAGYSNQHQHRHSGHEREEE) are disordered. The chain crosses the membrane as a helical span at residues 245 to 265 (GGFSVFIQLMPIIVLILVSLL). At 266–379 (SQLMVSNPPY…ERLTSIYKGG (114 aa)) the chain is on the lumenal side.

The protein belongs to the DnaJ family. DNAJB12/DNAJB14 subfamily. In terms of assembly, interacts (via J domain) with HSPA8/Hsc70. Forms a multiprotein complex, at least composed of DNAJB12, DNAJB14, HSPA8/Hsc70 and SGTA; interaction with DNAJB14 and HSPA8/Hsc70 is direct.

The protein resides in the endoplasmic reticulum membrane. Its subcellular location is the nucleus membrane. Functionally, acts as a co-chaperone with HSPA8/Hsc70; required to promote protein folding and trafficking, prevent aggregation of client proteins, and promote unfolded proteins to endoplasmic reticulum-associated degradation (ERAD) pathway. Acts by determining HSPA8/Hsc70's ATPase and polypeptide-binding activities. Can also act independently of HSPA8/Hsc70: together with DNAJB12, acts as a chaperone that promotes maturation of potassium channels KCND2 and KCNH2 by stabilizing nascent channel subunits and assembling them into tetramers. While stabilization of nascent channel proteins is dependent on HSPA8/Hsc70, the process of oligomerization of channel subunits is independent of HSPA8/Hsc70. When overexpressed, forms membranous structures together with DNAJB12 and HSPA8/Hsc70 within the nucleus; the role of these structures, named DJANGOs, is still unclear. The protein is DnaJ homolog subfamily B member 14 (DNAJB14) of Bos taurus (Bovine).